The sequence spans 255 residues: MNILIANDDGVFAPGIQALADALKPLGRVVVVAPESERSGFSSALTLDRPLRPIQIAEDVWAVNGTPADCVYLSMNGLFDFEFDLVVSGINSGANLGDDVLYSGTVGAAFEGRLMKQPAIAVSLAGPDVRSYDHKDDYAQAAKWVHDFIAKGLPALPPRHIFNINIPDVPQLKGTQITYQGRRAQSKPITSHVDPRGRQVYWIGLAGEAVTDPQRIASQIQSDFFAVANSFVSVTPIQMDATNYAVLEDLQASLG.

A divalent metal cation is bound by residues aspartate 8, aspartate 9, serine 39, and asparagine 91.

The protein belongs to the SurE nucleotidase family. A divalent metal cation is required as a cofactor.

The protein resides in the cytoplasm. The catalysed reaction is a ribonucleoside 5'-phosphate + H2O = a ribonucleoside + phosphate. Its function is as follows. Nucleotidase that shows phosphatase activity on nucleoside 5'-monophosphates. The sequence is that of 5'-nucleotidase SurE from Acinetobacter baumannii (strain ATCC 17978 / DSM 105126 / CIP 53.77 / LMG 1025 / NCDC KC755 / 5377).